The chain runs to 345 residues: MDTYDSQGPTSRRRTSNLKDYFVSATPLQKRLKLARRQSSVFPSPSRRKIPQCSQLQEDIDPQKVAFLLHKQWTVYSLTPLYKFSYSNLKDYSRLLSAFIAAEKQKGLAVEVGEDFNIKVIFSTLLGVKGTQRDPEAFLVQIRSESQSSREHRQDKVLWTGWFCCVFGENLQETVSEDFTCLPLFLAHGAESNTSLIGGWFQKTFDCCFSPLAISAFNLSWMAAMWTACKMDHYMATTEFFWSVPCSPQSLDISYAIHPEDAKALWDSVHKTPGEVTQEEVDLFMNCLYSHFHRHFRIHLSATRLVRVSTSVASAHTDGKIKILCHKYLIGVLAYMTELAIFQIE.

Phosphoserine is present on residues S40 and S54.

This sequence belongs to the CENP-L/IML3 family. Component of the CENPA-CAD complex, composed of CENPI, CENPK, CENPL, CENPO, CENPP, CENPQ, CENPR and CENPS. The CENPA-CAD complex interacts with the CENPA-NAC complex, at least composed of CENPA, CENPC, CENPH, CENPM, CENPN, CENPT and CENPU.

The protein localises to the nucleus. The protein resides in the chromosome. It localises to the centromere. Its function is as follows. Component of the CENPA-CAD (nucleosome distal) complex, a complex recruited to centromeres which is involved in assembly of kinetochore proteins, mitotic progression and chromosome segregation. May be involved in incorporation of newly synthesized CENPA into centromeres via its interaction with the CENPA-NAC complex. This Rattus norvegicus (Rat) protein is Centromere protein L (Cenpl).